The primary structure comprises 149 residues: SsrA-binding protein (149 aa).

It belongs to the SmpB family.

The protein resides in the cytoplasm. Required for rescue of stalled ribosomes mediated by trans-translation. Binds to transfer-messenger RNA (tmRNA), required for stable association of tmRNA with ribosomes. tmRNA and SmpB together mimic tRNA shape, replacing the anticodon stem-loop with SmpB. tmRNA is encoded by the ssrA gene; the 2 termini fold to resemble tRNA(Ala) and it encodes a 'tag peptide', a short internal open reading frame. During trans-translation Ala-aminoacylated tmRNA acts like a tRNA, entering the A-site of stalled ribosomes, displacing the stalled mRNA. The ribosome then switches to translate the ORF on the tmRNA; the nascent peptide is terminated with the 'tag peptide' encoded by the tmRNA and targeted for degradation. The ribosome is freed to recommence translation, which seems to be the essential function of trans-translation. The sequence is that of SsrA-binding protein from Acholeplasma laidlawii (strain PG-8A).